Consider the following 187-residue polypeptide: Pyridoxal 5'-phosphate synthase subunit PdxT (187 aa).

47-49 (GES) is an L-glutamine binding site. The Nucleophile role is filled by C76. Residues R102 and 128–129 (IR) contribute to the L-glutamine site. Residues H165 and E167 each act as charge relay system in the active site.

This sequence belongs to the glutaminase PdxT/SNO family. In terms of assembly, in the presence of PdxS, forms a dodecamer of heterodimers. Only shows activity in the heterodimer.

The enzyme catalyses aldehydo-D-ribose 5-phosphate + D-glyceraldehyde 3-phosphate + L-glutamine = pyridoxal 5'-phosphate + L-glutamate + phosphate + 3 H2O + H(+). The catalysed reaction is L-glutamine + H2O = L-glutamate + NH4(+). It participates in cofactor biosynthesis; pyridoxal 5'-phosphate biosynthesis. Its function is as follows. Catalyzes the hydrolysis of glutamine to glutamate and ammonia as part of the biosynthesis of pyridoxal 5'-phosphate. The resulting ammonia molecule is channeled to the active site of PdxS. The sequence is that of Pyridoxal 5'-phosphate synthase subunit PdxT from Methanococcus maripaludis (strain C5 / ATCC BAA-1333).